We begin with the raw amino-acid sequence, 269 residues long: Putative hydro-lyase M446_2125 (269 aa).

The protein belongs to the D-glutamate cyclase family.

The sequence is that of Putative hydro-lyase M446_2125 from Methylobacterium sp. (strain 4-46).